The primary structure comprises 374 residues: UPF0754 membrane protein NWMN_1738 (374 aa).

Transmembrane regions (helical) follow at residues 4-24 (LFII…TNVI) and 354-374 (SLGF…AIFV).

This sequence belongs to the UPF0754 family.

It is found in the cell membrane. The protein is UPF0754 membrane protein NWMN_1738 of Staphylococcus aureus (strain Newman).